A 417-amino-acid polypeptide reads, in one-letter code: Autophagy-related protein 18 (417 aa).

4 WD repeats span residues 1-36, 76-114, 185-225, and 230-269; these read MSMNFVTFNQDYSYLAVGTSKGFRIFTTDPFGKSYE, ELTFPTTVLAIRLNRKRLVIVLEDQIYIYDIQTMKLVYT, AHKS…KLYQ, and SMPSRIYSMSFNITSTLLCVSSATETIHIFKLGQQQGLSK. A L/FRRG motif motif is present at residues 226-230; sequence FRRGS. The segment at 267-300 is disordered; that stretch reads LSKTSSPSRKLESSRGSGDESAVESASSEMSSRK. Residues 285–296 show a composition bias toward low complexity; sequence DESAVESASSEM. WD repeat units lie at residues 300–346 and 355–395; these read KHNG…AWIK and GGSG…GGEG.

This sequence belongs to the WD repeat PROPPIN family. Component of the PI(3,5)P2 regulatory complex.

It is found in the preautophagosomal structure membrane. Its subcellular location is the vacuole membrane. The protein localises to the endosome membrane. In terms of biological role, the PI(3,5)P2 regulatory complex regulates both the synthesis and turnover of phosphatidylinositol 3,5-bisphosphate (PtdIns(3,5)P2). Necessary for proper vacuole morphology. Plays an important role in osmotically-induced vacuole fragmentation. Required for cytoplasm to vacuole transport (Cvt) vesicle formation, pexophagy and starvation-induced autophagy. Involved in correct ATG9 trafficking to the pre-autophagosomal structure. Might also be involved in premeiotic DNA replication. In Coccidioides immitis (strain RS) (Valley fever fungus), this protein is Autophagy-related protein 18 (ATG18).